The chain runs to 299 residues: Glycine--tRNA ligase alpha subunit (299 aa).

The protein belongs to the class-II aminoacyl-tRNA synthetase family. As to quaternary structure, tetramer of two alpha and two beta subunits.

The protein localises to the cytoplasm. The catalysed reaction is tRNA(Gly) + glycine + ATP = glycyl-tRNA(Gly) + AMP + diphosphate. In Dichelobacter nodosus (strain VCS1703A), this protein is Glycine--tRNA ligase alpha subunit.